The chain runs to 306 residues: SDS degradation transcriptional activation protein (306 aa).

The HTH lysR-type domain maps to 1–59 (MNDLRQLRHFVALAEHGHFARAAEAVNLSQPALSRSIQALENGLGCRLLDRGPRQVSLT). The segment at residues 19-38 (FARAAEAVNLSQPALSRSIQ) is a DNA-binding region (H-T-H motif).

It belongs to the LysR transcriptional regulatory family.

In terms of biological role, activates the transcription of the sdsA gene for sodium dodecyl sulfate (SDS) degradation. The polypeptide is SDS degradation transcriptional activation protein (sdsB) (Pseudomonas sp. (strain ATCC 19151)).